Reading from the N-terminus, the 216-residue chain is Homeobox-leucine zipper protein ATHB-40 (216 aa).

Residues 28–52 (GEVKQPKRRRKKTKGSVASADGGNG) form a disordered region. A DNA-binding region (homeobox) is located at residues 52 to 111 (GLFRKRKLTDEQVNMLEMSFGDEHKLESERKDRLAAELGLDPRQVAVWFQNRRARWKNKR). A leucine-zipper region spans residues 112–140 (LEEEYNKLKNSHDNVVVDKCRLESEVIQL).

Belongs to the HD-ZIP homeobox family. Class I subfamily. In terms of tissue distribution, expressed in roots, flowers and siliques.

It localises to the nucleus. Functionally, probable transcription factor. This is Homeobox-leucine zipper protein ATHB-40 (ATHB-40) from Arabidopsis thaliana (Mouse-ear cress).